We begin with the raw amino-acid sequence, 89 residues long: Small ribosomal subunit protein uS15 (89 aa).

Belongs to the universal ribosomal protein uS15 family. As to quaternary structure, part of the 30S ribosomal subunit. Forms a bridge to the 50S subunit in the 70S ribosome, contacting the 23S rRNA.

One of the primary rRNA binding proteins, it binds directly to 16S rRNA where it helps nucleate assembly of the platform of the 30S subunit by binding and bridging several RNA helices of the 16S rRNA. In terms of biological role, forms an intersubunit bridge (bridge B4) with the 23S rRNA of the 50S subunit in the ribosome. The sequence is that of Small ribosomal subunit protein uS15 from Xanthobacter autotrophicus (strain ATCC BAA-1158 / Py2).